Consider the following 174-residue polypeptide: ATP-dependent protease subunit HslV (174 aa).

Thr-2 is an active-site residue. Na(+)-binding residues include Ala-156, Cys-159, and Thr-162.

This sequence belongs to the peptidase T1B family. HslV subfamily. In terms of assembly, a double ring-shaped homohexamer of HslV is capped on each side by a ring-shaped HslU homohexamer. The assembly of the HslU/HslV complex is dependent on binding of ATP.

It localises to the cytoplasm. It catalyses the reaction ATP-dependent cleavage of peptide bonds with broad specificity.. Allosterically activated by HslU binding. Protease subunit of a proteasome-like degradation complex believed to be a general protein degrading machinery. This Agrobacterium fabrum (strain C58 / ATCC 33970) (Agrobacterium tumefaciens (strain C58)) protein is ATP-dependent protease subunit HslV.